Reading from the N-terminus, the 500-residue chain is Glutathione gamma-glutamylcysteinyltransferase 1 (500 aa).

The 221-residue stretch at methionine 1–serine 221 folds into the Peptidase C83 domain. Active-site residues include cysteine 56, histidine 162, and aspartate 180.

It belongs to the phytochelatin synthase family. As to expression, expressed in roots and shoots.

The catalysed reaction is [Glu(-Cys)](n)-Gly + glutathione + H(+) = [Glu(-Cys)](n+1)-Gly + glycine. With respect to regulation, requires cadmium for activity. In terms of biological role, involved in the synthesis of phytochelatins (PC) and homophytochelatins (hPC), the heavy-metal-binding peptides of plants. This Triticum aestivum (Wheat) protein is Glutathione gamma-glutamylcysteinyltransferase 1 (PCS1).